The primary structure comprises 185 residues: Photosystem I assembly protein Ycf4 (185 aa).

2 helical membrane passes run 24–44 (YIIG…SISS) and 66–86 (IIMG…WYLV).

The protein belongs to the Ycf4 family.

The protein resides in the cellular thylakoid membrane. In terms of biological role, seems to be required for the assembly of the photosystem I complex. The sequence is that of Photosystem I assembly protein Ycf4 from Prochlorococcus marinus (strain AS9601).